A 258-amino-acid chain; its full sequence is Imidazole glycerol phosphate synthase subunit HisF (258 aa).

Catalysis depends on residues Asp11 and Asp130.

The protein belongs to the HisA/HisF family. As to quaternary structure, heterodimer of HisH and HisF.

Its subcellular location is the cytoplasm. The catalysed reaction is 5-[(5-phospho-1-deoxy-D-ribulos-1-ylimino)methylamino]-1-(5-phospho-beta-D-ribosyl)imidazole-4-carboxamide + L-glutamine = D-erythro-1-(imidazol-4-yl)glycerol 3-phosphate + 5-amino-1-(5-phospho-beta-D-ribosyl)imidazole-4-carboxamide + L-glutamate + H(+). It participates in amino-acid biosynthesis; L-histidine biosynthesis; L-histidine from 5-phospho-alpha-D-ribose 1-diphosphate: step 5/9. In terms of biological role, IGPS catalyzes the conversion of PRFAR and glutamine to IGP, AICAR and glutamate. The HisF subunit catalyzes the cyclization activity that produces IGP and AICAR from PRFAR using the ammonia provided by the HisH subunit. In Methylorubrum populi (strain ATCC BAA-705 / NCIMB 13946 / BJ001) (Methylobacterium populi), this protein is Imidazole glycerol phosphate synthase subunit HisF.